A 312-amino-acid polypeptide reads, in one-letter code: Methionyl-tRNA formyltransferase (312 aa).

The tract at residues 34-54 (PDAASGRRGKPQPSPVAREAA) is disordered. 110–113 (SLLP) provides a ligand contact to (6S)-5,6,7,8-tetrahydrofolate.

The protein belongs to the Fmt family.

It catalyses the reaction L-methionyl-tRNA(fMet) + (6R)-10-formyltetrahydrofolate = N-formyl-L-methionyl-tRNA(fMet) + (6S)-5,6,7,8-tetrahydrofolate + H(+). Its function is as follows. Attaches a formyl group to the free amino group of methionyl-tRNA(fMet). The formyl group appears to play a dual role in the initiator identity of N-formylmethionyl-tRNA by promoting its recognition by IF2 and preventing the misappropriation of this tRNA by the elongation apparatus. This Mycobacterium tuberculosis (strain ATCC 25177 / H37Ra) protein is Methionyl-tRNA formyltransferase.